A 614-amino-acid chain; its full sequence is MLAGGVRSMPSPLLACWQPILLLVLGSVLSGSATGCPPRCECSAQDRAVLCHRKRFVAVPEGIPTETRLLDLGKNRIKTLNQDEFASFPHLEELELNENIVSAVEPGAFNNLFNLRTLGLRSNRLKLIPLGVFTGLSNLTKLDISENKIVILLDYMFQDLYNLKSLEVGDNDLVYISHRAFSGLNSLEQLTLEKCNLTSIPTEALSHLHGLIVLRLRHLNINAIRDYSFKRLYRLKVLEISHWPYLDTMTPNCLYGLNLTSLSITHCNLTAVPYLAVRHLVYLRFLNLSYNPISTIEGSMLHELLRLQEIQLVGGQLAMVEPYAFRGLNYLRVLNVSGNQLTTLEESVFHSVGNLETLILDSNPLACDCRLLWVFRRRWRLNFNRQQPTCATPEFVQGKEFKDFPDVLLPNYFTCRRARIRDRKAQQVFVDEGHTVQFVCRADGDPPPAILWLSPRKHLVSAKSNGRLTVFPDGTLEVRYAQVQDNGTYLCIAANAGGNDSMPAHLHVRSYSPDWPHQPNKTFAFIPNQPGEGEANSTRATVPFPFDIKTLIIATTMGFISFLGVVLFCLVLLFLWSRGKGNTKHNIEIEYVPRKSDAGISSADAPRKFNMKMI.

The first 35 residues, methionine 1 to glycine 35, serve as a signal peptide directing secretion. 2 cysteine pairs are disulfide-bonded: cysteine 36-cysteine 42 and cysteine 40-cysteine 51. One can recognise an LRRNT domain in the interval cysteine 36 to threonine 65. Over cysteine 36 to threonine 555 the chain is Extracellular. 11 LRR repeats span residues glutamate 66 to serine 87, histidine 90 to asparagine 111, asparagine 114 to glycine 135, asparagine 138 to aspartate 159, asparagine 162 to glycine 183, serine 186 to histidine 207, glycine 210 to arginine 231, asparagine 258 to histidine 279, tyrosine 282 to glutamate 303, arginine 306 to glycine 327, and tyrosine 330 to serine 351. A glycan (N-linked (GlcNAc...) asparagine) is linked at asparagine 138. N-linked (GlcNAc...) asparagine glycosylation occurs at asparagine 196. N-linked (GlcNAc...) asparagine glycans are attached at residues asparagine 258, asparagine 268, and asparagine 287. N-linked (GlcNAc...) asparagine glycosylation is present at asparagine 335. Residues asparagine 363–arginine 417 enclose the LRRCT domain. Cystine bridges form between cysteine 367/cysteine 390, cysteine 369/cysteine 415, and cysteine 440/cysteine 491. In terms of domain architecture, Ig-like C2-type spans proline 405–histidine 507. 2 N-linked (GlcNAc...) asparagine glycosylation sites follow: asparagine 486 and asparagine 536. The helical transmembrane segment at threonine 556–tryptophan 576 threads the bilayer. Residues serine 577–isoleucine 614 lie on the Cytoplasmic side of the membrane. Serine 596 is subject to Phosphoserine.

As to quaternary structure, homotetramer. Forms a ternary complex with RTN4R/NGFR and RTN4R/TNFRSF19. Interacts with NGRF, RTN4R and MYT1L. In terms of processing, N-glycosylated. Contains predominantly high-mannose glycans.

The protein localises to the cell membrane. Functional component of the Nogo receptor signaling complex (RTN4R/NGFR) in RhoA activation responsible for some inhibition of axonal regeneration by myelin-associated factors. Is also an important negative regulator of oligodentrocyte differentiation and axonal myelination. Acts in conjunction with RTN4 and RTN4R in regulating neuronal precursor cell motility during cortical development. The protein is Leucine-rich repeat and immunoglobulin-like domain-containing nogo receptor-interacting protein 1 (LINGO1) of Macaca fascicularis (Crab-eating macaque).